The primary structure comprises 109 residues: Parvalbumin, muscle (109 aa).

Alanine 1 is subject to N-acetylalanine. EF-hand domains follow at residues 38 to 73 (KSPE…FTPD) and 77 to 109 (LSDK…VAES). Positions 51, 53, 55, 62, 90, 92, 94, 96, and 101 each coordinate Ca(2+).

This sequence belongs to the parvalbumin family.

Its function is as follows. In muscle, parvalbumin is thought to be involved in relaxation after contraction. It binds two calcium ions. This is Parvalbumin, muscle from Gallus gallus (Chicken).